The following is a 92-amino-acid chain: UPF0358 protein SH1840 (92 aa).

The protein belongs to the UPF0358 family.

The chain is UPF0358 protein SH1840 from Staphylococcus haemolyticus (strain JCSC1435).